The primary structure comprises 318 residues: Pyrroline-5-carboxylate reductase ucsG (318 aa).

This sequence belongs to the pyrroline-5-carboxylate reductase family.

It functions in the pathway mycotoxin biosynthesis. Its function is as follows. Pyrroline-5-carboxylate reductase; part of the gene cluster that mediates the biosynthesis of UCS1025A, a member of the pyrrolizidinone family that acts as a strong telomerase inhibitor and displays potent antibacterial and antitumor properties. These compounds share a hemiaminal-containing pyrrolizidinone core fused with a gamma-lactone, giving a furopyrrolizidine that is connected to a decalin fragment. The polyketide synthase module (PKS) of the PKS-NRPS ucsA is responsible for the synthesis of the polyketide backbone via the condensation of an acetyl-CoA starter unit with 6 malonyl-CoA units. The downstream nonribosomal peptide synthetase (NRPS) module then amidates the carboxyl end of the polyketide with a 2S,3S-methylproline derived from L-isoleucine by the 2-oxoglutarate-dependent dioxygenase ucsF which converts L-isoleucine to (4S,5S)-4-methylpyrroline-5-carboxylate that is further converted to 2S,3S-methylproline by the pyrroline-5-carboxylate reductase ucsG. Reductive release of the completed aminoacyl polyketide from the assembly line can form the 3-pyrrolin-2-one structure via an intramolecular Knoevenagel reaction. Because ucsA lacks a designated enoylreductase (ER) domain, the required activity is provided the enoyl reductase ucsL. This keto acyclic precursor is the substrate of the Diels-Alderase ucsH, that catalyzes the Diels-Alder cycloaddition. Oxidation of the 3S-methyl group to a carboxylate by the cytochrome P450 monooxygenase ucsK allows an oxa-Michael cyclization that might involve the reductase/dehydrogenase ucsI and which furnishes the furopyrrolizidine. The oxidase ucsJ likely plays a critical role in stereoselective reduction of the C5-C6 double bond to afford the required R-configured carboxylate group. Further enolization and oxidation at C5 by an unidentified enzyme affords the last intermediate that can undergo oxa-Michael cyclization to yield UCS1025A. The sequence is that of Pyrroline-5-carboxylate reductase ucsG from Acremonium sp.